Consider the following 190-residue polypeptide: Xanthine phosphoribosyltransferase (190 aa).

Positions 20 and 27 each coordinate xanthine. A129–A133 is a binding site for 5-phospho-alpha-D-ribose 1-diphosphate. K157 contacts xanthine.

Belongs to the purine/pyrimidine phosphoribosyltransferase family. Xpt subfamily. Homodimer.

The protein localises to the cytoplasm. It carries out the reaction XMP + diphosphate = xanthine + 5-phospho-alpha-D-ribose 1-diphosphate. Its pathway is purine metabolism; XMP biosynthesis via salvage pathway; XMP from xanthine: step 1/1. In terms of biological role, converts the preformed base xanthine, a product of nucleic acid breakdown, to xanthosine 5'-monophosphate (XMP), so it can be reused for RNA or DNA synthesis. The chain is Xanthine phosphoribosyltransferase from Clostridioides difficile (strain 630) (Peptoclostridium difficile).